The following is a 331-amino-acid chain: Cathepsin S (331 aa).

The first 16 residues, 1 to 16, serve as a signal peptide directing secretion; the sequence is MKRLVCVLLVCSSAVA. A propeptide spans 17 to 114 (activation peptide); it reads QLHKDPTLDH…ITYKSNPNRI (98 aa). N-linked (GlcNAc...) asparagine glycosylation is present at N104. Cystine bridges form between C126–C224, C136–C180, C170–C213, and C272–C320. C139 is a catalytic residue. Residues H278 and N298 contribute to the active site.

This sequence belongs to the peptidase C1 family. Monomer.

The protein localises to the lysosome. Its subcellular location is the secreted. It localises to the cytoplasmic vesicle. It is found in the phagosome. The enzyme catalyses Similar to cathepsin L, but with much less activity on Z-Phe-Arg-|-NHMec, and more activity on the Z-Val-Val-Arg-|-Xaa compound.. Thiol protease. Key protease responsible for the removal of the invariant chain from MHC class II molecules and MHC class II antigen presentation. The bond-specificity of this proteinase is in part similar to the specificities of cathepsin L. This chain is Cathepsin S (CTSS), found in Homo sapiens (Human).